A 113-amino-acid chain; its full sequence is Small ribosomal subunit protein uS17 (113 aa).

This sequence belongs to the universal ribosomal protein uS17 family. Part of the 30S ribosomal subunit.

Functionally, one of the primary rRNA binding proteins, it binds specifically to the 5'-end of 16S ribosomal RNA. The chain is Small ribosomal subunit protein uS17 from Sulfurisphaera tokodaii (strain DSM 16993 / JCM 10545 / NBRC 100140 / 7) (Sulfolobus tokodaii).